A 274-amino-acid polypeptide reads, in one-letter code: E3 ubiquitin-protein ligase complex SLX5-SLX8 subunit SLX8 (274 aa).

Disordered stretches follow at residues 1–117 (MARR…GNNI) and 136–159 (ANTPSASPMLDAAPPTTKPGTNSK). Residues 13 to 28 (ENLRIKRVRLESVRQN) are compositionally biased toward basic and acidic residues. Ser50 is subject to Phosphoserine. Residue Thr66 is modified to Phosphothreonine. The segment covering 66–75 (TSEEDGDDDL) has biased composition (acidic residues). Ser67 is modified (phosphoserine). Residues 97–108 (GNHDRETMHTEE) are compositionally biased toward basic and acidic residues. Residues 206–250 (CPICFEPPETALMTLCGHVFCCPCLFQMVNSSRTCRQFGHCALCR) form an RING-type zinc finger.

Component of the heterodimeric SUMO-targeted ubiquitin ligase (STUbL) complex composed of SLX5 and SLX8.

The protein resides in the nucleus. Its subcellular location is the chromosome. The protein localises to the centromere. It is found in the kinetochore. It carries out the reaction S-ubiquitinyl-[E2 ubiquitin-conjugating enzyme]-L-cysteine + [acceptor protein]-L-lysine = [E2 ubiquitin-conjugating enzyme]-L-cysteine + N(6)-ubiquitinyl-[acceptor protein]-L-lysine.. It functions in the pathway protein modification; protein ubiquitination. Its function is as follows. Component of the SUMO-targeted ubiquitin ligase (STUbL) complex SLX5/SLX8 that mediates ubiquitination and subsequent desumoylation of sumoylated proteins and proteins containing SUMO-like domains for their degradation. The STUbL complex SLX5/SLX8 stimulates ubiquitin conjugating enzymes, including UBC1, UBC4, UBC5 and UBC13-MMS2, and mediates the proteolytic down-regulation of sumoylated proteins. The STUbL complex SLX5/SLX8 is involved in ubiquitin-mediated degradation of histone variant CSE4, preventing mislocalization to euchromatin. The complex plays an essential role in maintenance of chromosome stability and links SUMO-dependent ubiquitination to a centromere-specific function during mitosis. The complex is involved in proteolysis of spindle positioning protein KAR9 and ensures correct spindle function by regulating levels of microtubule-associated proteins. During replication, the complex helps to prevent DNA lesions via recombination and has a role in localizing the DNA damage protein DCD2. The complex especially ubiquitinates the nuclease YEN1 and prevents persistent accumulation of a fraction of YEN1 associated with sites of activity in late G2/M and helps maintain the balance between pro- and anti-crossover pathways during homologous recombination. It is also involved in ubiquitin-mediated degradation of DNA repair proteins RAD52 and RAD57. Finally, the complex is recruited to distinct genomic hotspots of non-H2B protein ubiquitination (ub-hotspots) by the sumoylated transcription factor-like protein EUC1 where it ubiquitinates EUC1 and presumably other targets. The chain is E3 ubiquitin-protein ligase complex SLX5-SLX8 subunit SLX8 (SLX8) from Saccharomyces cerevisiae (strain ATCC 204508 / S288c) (Baker's yeast).